A 3301-amino-acid polypeptide reads, in one-letter code: Cadherin EGF LAG seven-pass G-type receptor 3 (3301 aa).

An N-terminal signal peptide occupies residues 1–31 (MARRPLWWGLPGPSTPVLLLLLLSLFPFSRE). Residues 32 to 2531 (ELGGGGDQDW…RLEGDLELLA (2500 aa)) lie on the Extracellular side of the membrane. Disordered stretches follow at residues 148 to 189 (LPLD…ARRS) and 202 to 314 (KLWE…NRHP). A compositionally biased stretch (basic residues) spans 267–276 (MRSRGLFRRR). Cadherin domains lie at 317-424 (PQYN…APVF), 425-536 (EQAQ…APQF), 537-642 (SEKR…APIF), 643-747 (VSTP…RPEF), 748-849 (TMKE…RPVF), 850-952 (QSAH…APQF), 953-1058 (VASH…APVF), 1059-1160 (PAEE…SPVL), and 1161-1257 (NNFQ…VVII). N-linked (GlcNAc...) asparagine glycosylation is present at Asn-623. Asn-838 is a glycosylation site (N-linked (GlcNAc...) asparagine). Asn-1173, Asn-1213, Asn-1308, and Asn-1318 each carry an N-linked (GlcNAc...) asparagine glycan. The EGF-like 1; calcium-binding domain occupies 1366-1424 (DDNVCLREPCENYMKCVSVLRFDSSAPFLASTSTLFRPIQPIAGLRCRCPPGFTGDFCE). 9 disulfide bridges follow: Cys-1370-Cys-1381, Cys-1375-Cys-1412, Cys-1414-Cys-1423, Cys-1430-Cys-1441, Cys-1435-Cys-1450, Cys-1452-Cys-1459, Cys-1468-Cys-1479, Cys-1473-Cys-1489, and Cys-1491-Cys-1502. The EGF-like 2; calcium-binding domain maps to 1426 to 1460 (ELDLCYSNPCRNGGACARREGGYTCVCRPRFTDCE). One can recognise an EGF-like 3; calcium-binding domain in the interval 1464–1503 (EAGRCVPGVCRNGGTCTNAPNGGFRCQCPAGGAFEGPRCE). One can recognise a Laminin G-like 1 domain in the interval 1504-1708 (VAARSFPPSS…VANNGTMAGC (205 aa)). N-linked (GlcNAc...) asparagine glycans are attached at residues Asn-1638 and Asn-1702. 4 disulfide bridges follow: Cys-1682–Cys-1708, Cys-1715–Cys-1726, Cys-1720–Cys-1735, and Cys-1737–Cys-1746. The 37-residue stretch at 1711 to 1747 (KSHFCASGPCKNNGFCSERWGGFSCDCPVGFGGKDCR) folds into the EGF-like 4; calcium-binding domain. Residues 1751 to 1933 (AHPYHFQGNG…SHRVNVEPGC (183 aa)) enclose the Laminin G-like 2 domain. N-linked (GlcNAc...) asparagine glycosylation occurs at Asn-1759. Disulfide bonds link Cys-1904-Cys-1933, Cys-1939-Cys-1950, Cys-1944-Cys-1959, Cys-1961-Cys-1970, Cys-1974-Cys-1985, Cys-1979-Cys-1997, Cys-1999-Cys-2008, Cys-2016-Cys-2029, and Cys-2031-Cys-2041. Residues 1935–1971 (VTNPCASGPCPPHADCKDLWQTFSCTCRPGYYGPGCV) form the EGF-like 5; calcium-binding domain. Asp-1952 bears the (3R)-3-hydroxyaspartate mark. An EGF-like 6; calcium-binding domain is found at 1972–2002 (DACLLNPCQNQGSCRHLQGAPHGYTCDCVSG). The 40-residue stretch at 2003-2042 (YFGQHCEHRVDQQCPRGWWGSPTCGPCNCDVHKGFDPNCN) folds into the EGF-like 7; calcium-binding domain. A glycan (N-linked (GlcNAc...) asparagine) is linked at Asn-2042. Residues 2044-2079 (TNGQCHCKEFHYRPRGSDSCLPCDCYPVGSTSRSCA) enclose the EGF-like 8; calcium-binding domain. 5 disulfides stabilise this stretch: Cys-2048–Cys-2063, Cys-2050–Cys-2066, Cys-2068–Cys-2078, Cys-2087–Cys-2096, and Cys-2099–Cys-2111. Positions 2066 to 2113 (CDCYPVGSTSRSCAPHSGQCPCRPGALGRQCNSCDSPFAEVTASGCRV) constitute a Laminin EGF-like domain. Tyr-2115 is subject to Phosphotyrosine. 5 N-linked (GlcNAc...) asparagine glycosylation sites follow: Asn-2166, Asn-2185, Asn-2375, Asn-2465, and Asn-2497. Positions 2353 to 2388 (LLPSQASQPSPSEVLPTSSNAENATASSVVSPPAPL) are disordered. Residues 2355-2383 (PSQASQPSPSEVLPTSSNAENATASSVVS) show a composition bias toward low complexity. Residues 2357–2521 (QASQPSPSEV…GVLMDASPRE (165 aa)) enclose the GAIN-B domain. 2 disulfides stabilise this stretch: Cys-2471/Cys-2503 and Cys-2491/Cys-2505. The interval 2471-2521 (CVQWDPPGPTDQHGMWTARDCELVHRNGSHARCRCSRTGTFGVLMDASPRE) is GPS. Residues 2532–2552 (VFTHVVVAVSVTALVLTAAVL) traverse the membrane as a helical segment. The Cytoplasmic portion of the chain corresponds to 2553–2563 (LSLRSLKSNVR). Residues 2564–2584 (GIHANVAAALGVAELLFLLGI) traverse the membrane as a helical segment. Topologically, residues 2585–2592 (HRTHNQLL) are extracellular. A helical transmembrane segment spans residues 2593–2613 (CTAVAILLHYFFLSTFAWLLV). Topologically, residues 2614–2634 (QGLHLYRMQVEPRNVDRGAMR) are cytoplasmic. Residues 2635–2655 (FYHALGWGVPAVLLGLAVGLD) traverse the membrane as a helical segment. Topologically, residues 2656–2673 (PEGYGNPDFCWISIHEPL) are extracellular. Residues 2674–2694 (IWSFAGPIVLVIVMNGTMFLL) traverse the membrane as a helical segment. The Cytoplasmic segment spans residues 2695–2716 (AARTSCSTGQREAKKTSVLTLR). Residues 2717 to 2737 (SSFLLLLLVSASWLFGLLAVN) traverse the membrane as a helical segment. At 2738-2744 (HSILAFH) the chain is on the extracellular side. Residues 2745 to 2765 (YLHAGLCGLQGLAVLLLFCVL) form a helical membrane-spanning segment. Residues 2766 to 3301 (NADARAAWTP…SEVPRSEGHS (536 aa)) lie on the Cytoplasmic side of the membrane. 3 disordered regions span residues 2823 to 2844 (SSAR…YLRD), 2879 to 2919 (AGAD…RPLR), and 2969 to 2992 (SNKD…TSLG). Over residues 2881–2891 (ADSDSDSDLSL) the composition is skewed to acidic residues. Positions 2910–2919 (TRGRFQRPLR) are enriched in basic residues. Tyr-3042 is subject to Phosphotyrosine. A disordered region spans residues 3083-3301 (APVLHPLSRP…SEVPRSEGHS (219 aa)). Ser-3090 is modified (phosphoserine). Residues 3094–3111 (SQERLDTAPARLEARDRG) show a composition bias toward basic and acidic residues. Low complexity-rich tracts occupy residues 3168-3189 (SPQR…SLSR) and 3239-3261 (LSSI…STPS). A compositionally biased stretch (polar residues) spans 3276–3289 (TPRSATSHSISELS).

This sequence belongs to the G-protein coupled receptor 2 family. LN-TM7 subfamily. As to expression, expressed in the CNS and in the eye.

It is found in the cell membrane. Its function is as follows. Receptor that may have an important role in cell/cell signaling during nervous system formation. The chain is Cadherin EGF LAG seven-pass G-type receptor 3 (Celsr3) from Mus musculus (Mouse).